A 207-amino-acid chain; its full sequence is MTKVKICGITTVADAMMAVEAGADALGFVFYDQSPRNLEPAQAAEIIRVLPPFVQVVGLFVHAPLDFINTVTDRCRLDVVQLHGDEPQEFCAAVNRRVIKAFRIKDITSLDHMDEYNVAGYLLDAWSPKAFGGTGVTFNWDTALIAKKFGPIILAGGLTPENVAEAVHYVSPYGVDVSSGVEAAHRVKDPEKVRQFIQRAKECLGSM.

The protein belongs to the TrpF family.

It carries out the reaction N-(5-phospho-beta-D-ribosyl)anthranilate = 1-(2-carboxyphenylamino)-1-deoxy-D-ribulose 5-phosphate. It participates in amino-acid biosynthesis; L-tryptophan biosynthesis; L-tryptophan from chorismate: step 3/5. The chain is N-(5'-phosphoribosyl)anthranilate isomerase from Geotalea daltonii (strain DSM 22248 / JCM 15807 / FRC-32) (Geobacter daltonii).